Here is a 245-residue protein sequence, read N- to C-terminus: 4-hydroxy-tetrahydrodipicolinate reductase (245 aa).

Residues 7–12 (GARGKV), 75–77 (GTT), and 102–105 (APNF) each bind NAD(+). His-132 acts as the Proton donor/acceptor in catalysis. His-133 contributes to the (S)-2,3,4,5-tetrahydrodipicolinate binding site. Lys-136 acts as the Proton donor in catalysis. 142 to 143 (GT) lines the (S)-2,3,4,5-tetrahydrodipicolinate pocket.

Belongs to the DapB family.

The protein localises to the cytoplasm. The catalysed reaction is (S)-2,3,4,5-tetrahydrodipicolinate + NAD(+) + H2O = (2S,4S)-4-hydroxy-2,3,4,5-tetrahydrodipicolinate + NADH + H(+). The enzyme catalyses (S)-2,3,4,5-tetrahydrodipicolinate + NADP(+) + H2O = (2S,4S)-4-hydroxy-2,3,4,5-tetrahydrodipicolinate + NADPH + H(+). It participates in amino-acid biosynthesis; L-lysine biosynthesis via DAP pathway; (S)-tetrahydrodipicolinate from L-aspartate: step 4/4. In terms of biological role, catalyzes the conversion of 4-hydroxy-tetrahydrodipicolinate (HTPA) to tetrahydrodipicolinate. This chain is 4-hydroxy-tetrahydrodipicolinate reductase, found in Mycolicibacterium vanbaalenii (strain DSM 7251 / JCM 13017 / BCRC 16820 / KCTC 9966 / NRRL B-24157 / PYR-1) (Mycobacterium vanbaalenii).